A 209-amino-acid chain; its full sequence is MLNKQIMVDADNALAGRQEAMAVEPIHFVNGSDITASATQGQQEILFGMGCFWGAERLFWQLDGVVSTSVGYSGGFTLNPTYQEVCSGQTGHTEVVRVIFDPQVLPLEQLLEKFWERHDPTQGMRQGNDLGTQYRSAIYTFSDQQLDIALASQQAYQAALANQQHNTITTEIRPAGPYFYAETYHQQYLAKNPEGYCGLGGTGVCFPPA.

C51 is an active-site residue.

The protein belongs to the MsrA Met sulfoxide reductase family.

It catalyses the reaction L-methionyl-[protein] + [thioredoxin]-disulfide + H2O = L-methionyl-(S)-S-oxide-[protein] + [thioredoxin]-dithiol. The enzyme catalyses [thioredoxin]-disulfide + L-methionine + H2O = L-methionine (S)-S-oxide + [thioredoxin]-dithiol. Has an important function as a repair enzyme for proteins that have been inactivated by oxidation. Catalyzes the reversible oxidation-reduction of methionine sulfoxide in proteins to methionine. The polypeptide is Peptide methionine sulfoxide reductase MsrA (Vibrio vulnificus (strain CMCP6)).